The primary structure comprises 459 residues: tRNA modification GTPase MnmE (459 aa).

Residues Arg29, Glu91, and Arg130 each coordinate (6S)-5-formyl-5,6,7,8-tetrahydrofolate. The TrmE-type G domain occupies 225-381 (GVKVAIVGRP…LEEALEQLVT (157 aa)). Asn235 serves as a coordination point for K(+). Residues 235–240 (NVGKSS), 254–260 (TDLPGTT), and 279–282 (DTAG) contribute to the GTP site. Ser239 contributes to the Mg(2+) binding site. Positions 254, 256, and 259 each coordinate K(+). Residue Thr260 participates in Mg(2+) binding. A (6S)-5-formyl-5,6,7,8-tetrahydrofolate-binding site is contributed by Lys459.

The protein belongs to the TRAFAC class TrmE-Era-EngA-EngB-Septin-like GTPase superfamily. TrmE GTPase family. In terms of assembly, homodimer. Heterotetramer of two MnmE and two MnmG subunits. It depends on K(+) as a cofactor.

The protein localises to the cytoplasm. Its function is as follows. Exhibits a very high intrinsic GTPase hydrolysis rate. Involved in the addition of a carboxymethylaminomethyl (cmnm) group at the wobble position (U34) of certain tRNAs, forming tRNA-cmnm(5)s(2)U34. The protein is tRNA modification GTPase MnmE of Synechococcus sp. (strain JA-2-3B'a(2-13)) (Cyanobacteria bacterium Yellowstone B-Prime).